The chain runs to 265 residues: Acetylglutamate kinase (265 aa).

Substrate-binding positions include 41 to 42, arginine 63, and asparagine 156; that span reads GG.

This sequence belongs to the acetylglutamate kinase family. ArgB subfamily.

The protein resides in the cytoplasm. It catalyses the reaction N-acetyl-L-glutamate + ATP = N-acetyl-L-glutamyl 5-phosphate + ADP. It functions in the pathway amino-acid biosynthesis; L-arginine biosynthesis; N(2)-acetyl-L-ornithine from L-glutamate: step 2/4. Functionally, catalyzes the ATP-dependent phosphorylation of N-acetyl-L-glutamate. This chain is Acetylglutamate kinase, found in Brevibacillus brevis (strain 47 / JCM 6285 / NBRC 100599).